The following is a 1203-amino-acid chain: Serine/threonine-protein kinase Nek1 (1203 aa).

Positions 4–258 constitute a Protein kinase domain; sequence YVRLQKIGEG…VNSILEKGFI (255 aa). Residues 10–18 and K33 contribute to the ATP site; that span reads IGEGSFGKA. The Proton acceptor role is filled by D128. A Phosphothreonine modification is found at T156. T162 carries the phosphothreonine; by autocatalysis modification. Positions 329-357 are disordered; that stretch reads LLEKKPPPKHKQAHQIPVKKMNSGEERKK. S417 and S437 each carry phosphoserine. T615 carries the phosphothreonine modification. Position 618 is a phosphoserine (S618). 2 disordered regions span residues 643-662 and 674-708; these read LTDTQEEEMEKSNSAISSKR and AQEDEKEKQHHSGSCETVGHKDEREYETENAISSD. Over residues 674-683 the composition is skewed to basic and acidic residues; that stretch reads AQEDEKEKQH. Phosphoserine occurs at positions 750, 786, 820, and 832. 2 disordered regions span residues 814–866 and 888–925; these read PSAT…LPPV and AVQQSEVCEDRIPGNVDQSCKDQRDPAVDDSPQSGCDV. The span at 839–850 shows a compositional bias: acidic residues; it reads NVEEPDDLETEV. S997 carries the post-translational modification Phosphoserine. Disordered stretches follow at residues 1021 to 1045 and 1063 to 1120; these read SLEIDELEDEPIKEGPSDSEDTVFE and REQP…ETTS. At S1071 the chain carries Phosphoserine.

This sequence belongs to the protein kinase superfamily. NEK Ser/Thr protein kinase family. NIMA subfamily. As to quaternary structure, binds to CBY2. Found in a complex with CFAP410, NEK1 and SPATA7. Interacts with CFAP410. Interacts (via Ser-997 phosphorylated form) with 14-3-3 proteins. Mg(2+) serves as cofactor. Predominantly in testes (germ cells and Sertoli cells). Lower levels in ovary (oocytes and granulosa cells), thymus and lung.

The protein resides in the nucleus. Its subcellular location is the cytoplasm. It is found in the cytoskeleton. It localises to the microtubule organizing center. The protein localises to the centrosome. It carries out the reaction L-seryl-[protein] + ATP = O-phospho-L-seryl-[protein] + ADP + H(+). It catalyses the reaction L-threonyl-[protein] + ATP = O-phospho-L-threonyl-[protein] + ADP + H(+). Functionally, phosphorylates serines and threonines, but also appears to possess tyrosine kinase activity. Involved in DNA damage checkpoint control and for proper DNA damage repair. In response to injury that includes DNA damage, NEK1 phosphorylates VDAC1 to limit mitochondrial cell death. May be implicated in the control of meiosis. Involved in cilium assembly. The protein is Serine/threonine-protein kinase Nek1 (Nek1) of Mus musculus (Mouse).